Reading from the N-terminus, the 147-residue chain is Large ribosomal subunit protein uL13 (147 aa).

Belongs to the universal ribosomal protein uL13 family. As to quaternary structure, part of the 50S ribosomal subunit.

Its function is as follows. This protein is one of the early assembly proteins of the 50S ribosomal subunit, although it is not seen to bind rRNA by itself. It is important during the early stages of 50S assembly. In Latilactobacillus sakei subsp. sakei (strain 23K) (Lactobacillus sakei subsp. sakei), this protein is Large ribosomal subunit protein uL13.